Reading from the N-terminus, the 265-residue chain is Shikimate dehydrogenase (NADP(+)) (265 aa).

Residues 15-17 (SLS) and Thr-62 contribute to the shikimate site. The Proton acceptor role is filled by Lys-66. Shikimate contacts are provided by Asn-87 and Asp-102. NADP(+) is bound by residues 125 to 129 (GAGGA), 149 to 154 (NRTLEK), and Leu-209. Tyr-211 serves as a coordination point for shikimate. Residue Gly-233 participates in NADP(+) binding.

Belongs to the shikimate dehydrogenase family. In terms of assembly, homodimer.

The catalysed reaction is shikimate + NADP(+) = 3-dehydroshikimate + NADPH + H(+). Its pathway is metabolic intermediate biosynthesis; chorismate biosynthesis; chorismate from D-erythrose 4-phosphate and phosphoenolpyruvate: step 4/7. Its function is as follows. Involved in the biosynthesis of the chorismate, which leads to the biosynthesis of aromatic amino acids. Catalyzes the reversible NADPH linked reduction of 3-dehydroshikimate (DHSA) to yield shikimate (SA). This Legionella pneumophila (strain Lens) protein is Shikimate dehydrogenase (NADP(+)).